Here is a 508-residue protein sequence, read N- to C-terminus: Cytochrome P450 monooxygenase tenA (508 aa).

Residues 8–24 (VSLPYLILSACLSVILL) traverse the membrane as a helical segment. Cys-456 is a heme binding site.

The protein belongs to the cytochrome P450 family. The cofactor is heme.

The protein resides in the membrane. It functions in the pathway secondary metabolite biosynthesis. In terms of biological role, cytochrome P450 monooxygenase; part of the gene cluster that mediates the biosynthesis of tenellin-type 2-pyridones, iron-chelating compounds involved in iron stress tolerance, competition with the natural competitor fungus Metarhizium robertsii and insect hosts infection. TenA catalyzes an oxidative ring expansion of pretenellin A and 14-hydropretellenin A to form the 2-pyridone core, leading to the production of pretenellin B and pyridovericin, respectively. The pathway begins with the assembly of the polyketide-amino acid backbone by the hybrid PKS-NRPS tenS with the help of the enoyl reductase tenC. These enzymes catalyze the synthesis of the pyrrolidine-2-dione intermediates pretellinin A, 11-hydropretellenin A, 12-hydropretellenin A, 13-hydropretellenin A, 14-hydropretellenin A, 12-oxopretellenin A and prototellinin D. The cytochrome P450 monooxygenase tenA then catalyzes an oxidative ring expansion of pretenellin A and 14-hydropretellenin A to form the 2-pyridone core, leading to pretenellin B and pyridovericin, respectively. The cytochrome P450 monooxygenase tenB is then required for the selective N-hydroxylation of the 2-pyridone nitrogen of yield tellinin and 15-hydroxytellenin (15-HT), respectively. The UDP-glucosyltransferase GT1 and the methyltransferase MT1, located outside the tenS gene cluster, contribute to the stepwise glycosylation and methylation of 15-HT to obtain the glycoside pyridovericin-N-O-(4-O-methyl-beta-D-glucopyranoside) (PMGP). Additional related compounds such as 1-O-methyl-15-HT, (8Z)-1-O-methyl-15-HT, and O-methyltenellin A are also produced but the enzymes involved in their biosynthesis have still to be determined. This Beauveria bassiana (White muscardine disease fungus) protein is Cytochrome P450 monooxygenase tenA.